The following is a 438-amino-acid chain: Transposon Ty2-F Gag polyprotein (438 aa).

Polar residues-rich tracts occupy residues 1-11, 19-39, and 49-60; these read MESQQLHQNPH, ASVTSKEVPSNQDPLAVSASN, and KVNSQQETTPGT. Disordered regions lie at residues 1-86, 366-397, and 419-438; these read MESQ…GQYQ, VSRTSPNTTNTKVTTRNYHRTNSSKPRAAKAH, and SSQYLSDDNELSLRPATERI. The interval 295 to 397 is RNA-binding; the sequence is ENNINVSDRL…SSKPRAAKAH (103 aa). The segment covering 369–381 has biased composition (low complexity); that stretch reads TSPNTTNTKVTTR.

In terms of assembly, homotrimer.

Its subcellular location is the cytoplasm. Capsid protein (CA) is the structural component of the virus-like particle (VLP), forming the shell that encapsulates the retrotransposons dimeric RNA genome. The particles are assembled from trimer-clustered units and there are holes in the capsid shells that allow for the diffusion of macromolecules. CA also has nucleocapsid-like chaperone activity, promoting primer tRNA(i)-Met annealing to the multipartite primer-binding site (PBS), dimerization of Ty2 RNA and initiation of reverse transcription. The protein is Transposon Ty2-F Gag polyprotein (TY2A-F) of Saccharomyces cerevisiae (strain ATCC 204508 / S288c) (Baker's yeast).